The primary structure comprises 154 residues: N-acetylneuraminate anomerase NanQ (154 aa).

This sequence belongs to the NanQ anomerase family. It depends on Zn(2+) as a cofactor.

Its subcellular location is the cytoplasm. It catalyses the reaction N-acetyl-alpha-neuraminate = aceneuramate. The enzyme catalyses N-acetyl-beta-neuraminate = aceneuramate. Its activity is regulated as follows. Inhibited by 1,10-phenanthroline. Its function is as follows. Opens both the alpha- and beta-forms of N-acetylneuraminate (sialic acid; Neu5Ac) to provide aceneuramate, the preferred substrate for NanA. Has preferential activity on the beta-anomer rather than the alpha-anomer. Accelerates a reaction that is spontaneous at slightly alkaline pH, facilitates the reaction at acidic pH. The chain is N-acetylneuraminate anomerase NanQ from Escherichia coli (strain K12).